A 155-amino-acid polypeptide reads, in one-letter code: S-ribosylhomocysteine lyase (155 aa).

The Fe cation site is built by H58, H62, and C125.

This sequence belongs to the LuxS family. As to quaternary structure, homodimer. It depends on Fe cation as a cofactor.

The catalysed reaction is S-(5-deoxy-D-ribos-5-yl)-L-homocysteine = (S)-4,5-dihydroxypentane-2,3-dione + L-homocysteine. In terms of biological role, involved in the synthesis of autoinducer 2 (AI-2) which is secreted by bacteria and is used to communicate both the cell density and the metabolic potential of the environment. The regulation of gene expression in response to changes in cell density is called quorum sensing. Catalyzes the transformation of S-ribosylhomocysteine (RHC) to homocysteine (HC) and 4,5-dihydroxy-2,3-pentadione (DPD). This Chromohalobacter salexigens (strain ATCC BAA-138 / DSM 3043 / CIP 106854 / NCIMB 13768 / 1H11) protein is S-ribosylhomocysteine lyase.